The chain runs to 268 residues: Microtubule-associated protein RP/EB family member 1 (268 aa).

N-acetylalanine is present on Ala-2. The region spanning 14–116 is the Calponin-homology (CH) domain; it reads NLSRHDMLAW…FVQWFKKFFD (103 aa). Lys-66 is subject to N6-crotonyllysine. Residue Tyr-124 is modified to Phosphotyrosine. The interval 124–268 is interaction with MTUS2/TIP150; sequence YDPVAARQGQ…GGPQEEQEEY (145 aa). Low complexity predominate over residues 147-160; the sequence is NKPKKPLSSSSAAP. Positions 147 to 184 are disordered; it reads NKPKKPLSSSSAAPQRPITTHRTTATPKAGPGVVRKNP. Ser-155 bears the Phosphoserine mark. Residues 163–172 show a composition bias toward polar residues; it reads PITTHRTTAT. An EB1 C-terminal domain is found at 185–255; it reads GVGNGDDEAA…LYATDEGFVI (71 aa). Residues 185 to 268 are interaction with CDK5RAP2; the sequence is GVGNGDDEAA…GGPQEEQEEY (84 aa). The tract at residues 206 to 211 is interaction with APC; that stretch reads TVEDLE. Positions 208–268 are DCTN1-binding; it reads EDLEKERDFY…GGPQEEQEEY (61 aa). Lys-220 carries the N6-acetyllysine modification. Residues 220–242 form an APC-binding region; that stretch reads KLRNIELICQENEGENNPVLQRI. The interaction with SKA1 stretch occupies residues 232-255; the sequence is EGENNPVLQRIVDILYATDEGFVI.

Belongs to the MAPRE family. In terms of assembly, homodimer. Heterodimer with MAPRE3. Interacts with DCTN1, DCTN2, TERF1 and dynein intermediate chain. Interaction with DIAPH1 and DIAPH2. Interacts (via C-terminal residues 206-211) with APC (via C-terminal residues 2674-2845); the interaction inhibits association with and bundling of F-actin. Interacts with CLASP2, DST, KIF2C and STIM1; probably required for their targeting to the growing microtubule plus ends. Interacts with MTUS2; interaction is direct and probably targets MTUS2 to microtubules. Interacts (via C-terminus) with SKA1 (via SXIP motif); the interaction is direct and stabilizes the kinetochore-microtubule attachment of the SKA1 complex. Interacts with APC2. Interacts with CLASP1. Interacts with CDK5RAP2. Interacts with MACF1. Interacts with RABL2/RABL2A; binds preferentially to GTP-bound RABL2. Interacts with KCNAB2. Interacts (via C-terminus) with CLIP1. Interacts with SLAIN2 and SLAIN1. Interacts with KIF18B; this interaction is required for efficient accumulation of KIF18B at microtubule plus ends. Interacts with MISP. Interacts with KNSTRN. Interacts with NCKAP5L. Interacts with CAMSAP2. Interacts with PDE4DIP isoform 13/MMG8/SMYLE; this interaction is required for its recruitment to the Golgi apparatus. Forms a pericentrosomal complex with AKAP9, CDK5RAP2 and PDE4DIP isoform 13/MMG8/SMYLE; within this complex, MAPRE1 binding to CDK5RAP2 may be mediated by PDE4DIP. Interacts with AKNA. Interacts with GAS2L1, GAS2L2, and GAS2L3. In terms of processing, acetylation at Lys-220 by KAT2B/PCAF promotes dynamic kinetochore-microtubule interactions in early mitosis. Crotonylated by KAT5 during mitosis, promoting astral microtubule plasticity and dynamic connection between astral microtubules and the cortex during mitotic chromosome segregation, thereby ensuring accurate spindle positioning in mitosis. Decrotonylated by HDAC3.

It localises to the cytoplasm. Its subcellular location is the cytoskeleton. It is found in the microtubule organizing center. The protein localises to the centrosome. The protein resides in the golgi apparatus. It localises to the spindle. Its subcellular location is the spindle pole. Functionally, plus-end tracking protein (+TIP) that binds to the plus-end of microtubules and regulates the dynamics of the microtubule cytoskeleton. Recruits other +TIP proteins to microtubules by binding to a conserved Ser-X-Leu-Pro (SXLP) motif in their polypeptide chains. Promotes cytoplasmic microtubule nucleation and elongation. Involved in mitotic spindle positioning by stabilizing microtubules and promoting dynamic connection between astral microtubules and the cortex during mitotic chromosome segregation. Assists chromosome alignment in metaphase by recruiting the SKA complex to the spindle and stabilizing its interactions with microtubule bundles (K-fibers). Also acts as a regulator of minus-end microtubule organization: interacts with the complex formed by AKAP9 and PDE4DIP, leading to recruit CAMSAP2 to the Golgi apparatus, thereby tethering non-centrosomal minus-end microtubules to the Golgi, an important step for polarized cell movement. Promotes elongation of CAMSAP2-decorated microtubule stretches on the minus-end of microtubules. Acts as a regulator of autophagosome transport via interaction with CAMSAP2. Functions downstream of Rho GTPases and DIAPH1 in stable microtubule formation. May play a role in cell migration. The sequence is that of Microtubule-associated protein RP/EB family member 1 (MAPRE1) from Bos taurus (Bovine).